The following is a 292-amino-acid chain: Acidic endochitinase (292 aa).

Positions 1 to 25 are cleaved as a signal peptide; the sequence is MAAHKITTTLSIFFLLSSIFRSSDA. The 267-residue stretch at 26-292 folds into the GH18 domain; sequence AGIAIYWGQN…YSDSIKGSIG (267 aa). Disulfide bonds link C45-C92 and C75-C82. E152 serves as the catalytic Proton donor. Residues C180 and C209 are joined by a disulfide bond.

Belongs to the glycosyl hydrolase 18 family. Chitinase class II subfamily.

The protein resides in the secreted. It localises to the extracellular space. The catalysed reaction is Random endo-hydrolysis of N-acetyl-beta-D-glucosaminide (1-&gt;4)-beta-linkages in chitin and chitodextrins.. Its function is as follows. This protein functions as a defense against chitin containing fungal pathogens. The protein is Acidic endochitinase of Cucumis sativus (Cucumber).